Reading from the N-terminus, the 169-residue chain is Probable chorismate pyruvate-lyase (169 aa).

Positions 71, 110, and 150 each coordinate substrate.

This sequence belongs to the UbiC family.

It localises to the cytoplasm. The catalysed reaction is chorismate = 4-hydroxybenzoate + pyruvate. The protein operates within cofactor biosynthesis; ubiquinone biosynthesis. Its function is as follows. Removes the pyruvyl group from chorismate, with concomitant aromatization of the ring, to provide 4-hydroxybenzoate (4HB) for the ubiquinone pathway. This Acinetobacter baumannii (strain ATCC 17978 / DSM 105126 / CIP 53.77 / LMG 1025 / NCDC KC755 / 5377) protein is Probable chorismate pyruvate-lyase.